The sequence spans 86 residues: Large ribosomal subunit protein bL27 (86 aa).

Residues 1-11 (MATKKAGGGSR) show a composition bias toward gly residues. Residues 1 to 24 (MATKKAGGGSRNGRDSAGRRLGVK) form a disordered region.

The protein belongs to the bacterial ribosomal protein bL27 family.

This is Large ribosomal subunit protein bL27 from Rickettsia africae (strain ESF-5).